The following is a 177-amino-acid chain: ATP synthase subunit delta (177 aa).

It belongs to the ATPase delta chain family. In terms of assembly, F-type ATPases have 2 components, F(1) - the catalytic core - and F(0) - the membrane proton channel. F(1) has five subunits: alpha(3), beta(3), gamma(1), delta(1), epsilon(1). F(0) has three main subunits: a(1), b(2) and c(10-14). The alpha and beta chains form an alternating ring which encloses part of the gamma chain. F(1) is attached to F(0) by a central stalk formed by the gamma and epsilon chains, while a peripheral stalk is formed by the delta and b chains.

The protein resides in the cell inner membrane. Its function is as follows. F(1)F(0) ATP synthase produces ATP from ADP in the presence of a proton or sodium gradient. F-type ATPases consist of two structural domains, F(1) containing the extramembraneous catalytic core and F(0) containing the membrane proton channel, linked together by a central stalk and a peripheral stalk. During catalysis, ATP synthesis in the catalytic domain of F(1) is coupled via a rotary mechanism of the central stalk subunits to proton translocation. Functionally, this protein is part of the stalk that links CF(0) to CF(1). It either transmits conformational changes from CF(0) to CF(1) or is implicated in proton conduction. This chain is ATP synthase subunit delta, found in Citrobacter koseri (strain ATCC BAA-895 / CDC 4225-83 / SGSC4696).